The sequence spans 496 residues: 6-phosphogluconate dehydrogenase, decarboxylating (496 aa).

Residues 13-18 (GLDVSI), 24-26 (DNV), 68-70 (ITH), and Asn-96 contribute to the NADP(+) site. Residues Asn-96 and 122–124 (SGG) each bind substrate. The active-site Proton acceptor is Lys-178. 181-182 (HN) contributes to the substrate binding site. Residue Glu-185 is the Proton donor of the active site. Substrate-binding residues include Arg-300 and His-468. The interval 476–496 (PGEDPGPVSKGPHHYEWRPAK) is disordered.

It belongs to the 6-phosphogluconate dehydrogenase family. Homodimer.

Its subcellular location is the cytoplasm. It carries out the reaction 6-phospho-D-gluconate + NADP(+) = D-ribulose 5-phosphate + CO2 + NADPH. It participates in carbohydrate degradation; pentose phosphate pathway; D-ribulose 5-phosphate from D-glucose 6-phosphate (oxidative stage): step 3/3. Functionally, catalyzes the oxidative decarboxylation of 6-phosphogluconate to ribulose 5-phosphate and CO(2), with concomitant reduction of NADP to NADPH. The protein is 6-phosphogluconate dehydrogenase, decarboxylating of Emericella nidulans (strain FGSC A4 / ATCC 38163 / CBS 112.46 / NRRL 194 / M139) (Aspergillus nidulans).